A 278-amino-acid chain; its full sequence is NAD-capped RNA hydrolase NudC (278 aa).

Arg84 serves as a coordination point for substrate. Zn(2+) is bound by residues Cys114 and Cys117. A substrate-binding site is contributed by Glu127. Cys132 provides a ligand contact to Zn(2+). Residue Tyr140 participates in substrate binding. Positions 141-264 (PRISPSMIVL…SIARYLIEAY (124 aa)) constitute a Nudix hydrolase domain. Residues Ala174, Glu190, and Glu194 each contribute to the a divalent metal cation site. The Nudix box motif lies at 175–196 (GFVEPGESAEDCVHREVMEEVQ). 208 to 215 (QCWPFPHS) provides a ligand contact to substrate. Glu235 contributes to the a divalent metal cation binding site. Position 257 (Ala257) interacts with substrate.

This sequence belongs to the Nudix hydrolase family. NudC subfamily. As to quaternary structure, homodimer. Mg(2+) is required as a cofactor. Requires Mn(2+) as cofactor. The cofactor is Zn(2+).

The enzyme catalyses a 5'-end NAD(+)-phospho-ribonucleoside in mRNA + H2O = a 5'-end phospho-adenosine-phospho-ribonucleoside in mRNA + beta-nicotinamide D-ribonucleotide + 2 H(+). The catalysed reaction is NAD(+) + H2O = beta-nicotinamide D-ribonucleotide + AMP + 2 H(+). It catalyses the reaction NADH + H2O = reduced beta-nicotinamide D-ribonucleotide + AMP + 2 H(+). Its function is as follows. mRNA decapping enzyme that specifically removes the nicotinamide adenine dinucleotide (NAD) cap from a subset of mRNAs by hydrolyzing the diphosphate linkage to produce nicotinamide mononucleotide (NMN) and 5' monophosphate mRNA. The NAD-cap is present at the 5'-end of some mRNAs and stabilizes RNA against 5'-processing. Has preference for mRNAs with a 5'-end purine. Catalyzes the hydrolysis of a broad range of dinucleotide pyrophosphates. The protein is NAD-capped RNA hydrolase NudC of Pseudomonas syringae pv. syringae (strain B728a).